The following is a 195-amino-acid chain: 2-amino-4-hydroxy-6-hydroxymethyldihydropteridine pyrophosphokinase (195 aa).

Belongs to the HPPK family.

It catalyses the reaction 6-hydroxymethyl-7,8-dihydropterin + ATP = (7,8-dihydropterin-6-yl)methyl diphosphate + AMP + H(+). Its pathway is cofactor biosynthesis; tetrahydrofolate biosynthesis; 2-amino-4-hydroxy-6-hydroxymethyl-7,8-dihydropteridine diphosphate from 7,8-dihydroneopterin triphosphate: step 4/4. Its function is as follows. Catalyzes the transfer of pyrophosphate from adenosine triphosphate (ATP) to 6-hydroxymethyl-7,8-dihydropterin, an enzymatic step in folate biosynthesis pathway. This is 2-amino-4-hydroxy-6-hydroxymethyldihydropteridine pyrophosphokinase (folK) from Synechocystis sp. (strain ATCC 27184 / PCC 6803 / Kazusa).